We begin with the raw amino-acid sequence, 981 residues long: Peroxisomal ATPase PEX6 (981 aa).

Omega-N-methylarginine is present on Arg119. Residues 471 to 478 (GPPGSGKT) and 745 to 752 (GPPGTGKT) contribute to the ATP site.

Belongs to the AAA ATPase family. In terms of assembly, interacts with PEX1; forming the PEX1-PEX6 AAA ATPase complex, which is composed of a heterohexamer formed by a trimer of PEX1-PEX6 dimers. Interacts with PEX26; interaction is direct and promotes recruitment to peroxisomal membranes. Interacts with ZFAND6. In the teeth, expressed in ameloblasts and odontoblasts. Expressed in the retina, at higher levels in the ganglion cell layer and photoreceptor layer at the joint between the outer and inner segments.

The protein localises to the cytoplasm. The protein resides in the cytosol. It localises to the peroxisome membrane. Its subcellular location is the cell projection. It is found in the cilium. The protein localises to the photoreceptor outer segment. It carries out the reaction ATP + H2O = ADP + phosphate + H(+). In terms of biological role, component of the PEX1-PEX6 AAA ATPase complex, a protein dislocase complex that mediates the ATP-dependent extraction of the PEX5 receptor from peroxisomal membranes, an essential step for PEX5 recycling. Specifically recognizes PEX5 monoubiquitinated at 'Cys-11', and pulls it out of the peroxisome lumen through the PEX2-PEX10-PEX12 retrotranslocation channel. Extraction by the PEX1-PEX6 AAA ATPase complex is accompanied by unfolding of the TPR repeats and release of bound cargo from PEX5. This chain is Peroxisomal ATPase PEX6, found in Mus musculus (Mouse).